The sequence spans 55 residues: ATP synthase F(0) complex subunit 8 (55 aa).

Residues 10–30 form a helical membrane-spanning segment; sequence FPIMMLSWLIFSLIIQPKLLL. A disordered region spans residues 35 to 55; that stretch reads NPPSNKTTTTTRSNPWTWPWT. Residues 37–55 are compositionally biased toward low complexity; it reads PSNKTTTTTRSNPWTWPWT.

This sequence belongs to the ATPase protein 8 family. As to quaternary structure, component of the ATP synthase complex composed at least of ATP5F1A/subunit alpha, ATP5F1B/subunit beta, ATP5MC1/subunit c (homooctomer), MT-ATP6/subunit a, MT-ATP8/subunit 8, ATP5ME/subunit e, ATP5MF/subunit f, ATP5MG/subunit g, ATP5MK/subunit k, ATP5MJ/subunit j, ATP5F1C/subunit gamma, ATP5F1D/subunit delta, ATP5F1E/subunit epsilon, ATP5PF/subunit F6, ATP5PB/subunit b, ATP5PD/subunit d, ATP5PO/subunit OSCP. ATP synthase complex consists of a soluble F(1) head domain (subunits alpha(3) and beta(3)) - the catalytic core - and a membrane F(0) domain - the membrane proton channel (subunits c, a, 8, e, f, g, k and j). These two domains are linked by a central stalk (subunits gamma, delta, and epsilon) rotating inside the F1 region and a stationary peripheral stalk (subunits F6, b, d, and OSCP).

The protein localises to the mitochondrion membrane. Its function is as follows. Subunit 8, of the mitochondrial membrane ATP synthase complex (F(1)F(0) ATP synthase or Complex V) that produces ATP from ADP in the presence of a proton gradient across the membrane which is generated by electron transport complexes of the respiratory chain. ATP synthase complex consist of a soluble F(1) head domain - the catalytic core - and a membrane F(1) domain - the membrane proton channel. These two domains are linked by a central stalk rotating inside the F(1) region and a stationary peripheral stalk. During catalysis, ATP synthesis in the catalytic domain of F(1) is coupled via a rotary mechanism of the central stalk subunits to proton translocation. In vivo, can only synthesize ATP although its ATP hydrolase activity can be activated artificially in vitro. Part of the complex F(0) domain. The sequence is that of ATP synthase F(0) complex subunit 8 from Opisthocomus hoazin (Hoatzin).